The primary structure comprises 239 residues: UPF0126 membrane protein VC_2382 (239 aa).

6 consecutive transmembrane segments (helical) span residues 38–58 (LLYL…VLLA), 62–82 (KMDP…GGTI), 86–106 (ALGA…VIMI), 122–142 (AWWI…GIGV), 153–173 (LIAI…RDVL), and 185–205 (VYAT…AMGY).

It belongs to the UPF0126 family.

It is found in the cell membrane. In Vibrio cholerae serotype O1 (strain ATCC 39315 / El Tor Inaba N16961), this protein is UPF0126 membrane protein VC_2382.